A 462-amino-acid polypeptide reads, in one-letter code: Argininosuccinate lyase (462 aa).

The protein belongs to the lyase 1 family. Argininosuccinate lyase subfamily.

It is found in the cytoplasm. It carries out the reaction 2-(N(omega)-L-arginino)succinate = fumarate + L-arginine. Its pathway is amino-acid biosynthesis; L-arginine biosynthesis; L-arginine from L-ornithine and carbamoyl phosphate: step 3/3. The sequence is that of Argininosuccinate lyase from Ehrlichia ruminantium (strain Welgevonden).